Consider the following 240-residue polypeptide: Sugar fermentation stimulation protein homolog (240 aa).

The protein belongs to the SfsA family.

The sequence is that of Sugar fermentation stimulation protein homolog from Saccharolobus islandicus (strain M.16.4 / Kamchatka #3) (Sulfolobus islandicus).